We begin with the raw amino-acid sequence, 213 residues long: Na(+)-translocating NADH-quinone reductase subunit D (213 aa).

6 consecutive transmembrane segments (helical) span residues 22–42, 43–63, 77–97, 101–121, 131–151, and 183–203; these read LIAI…TTAL, TMGF…SLLR, IIIS…FFTI, LSVF…AESM, FLDG…ISII, and LGLM…IWIV.

It belongs to the NqrDE/RnfAE family. As to quaternary structure, composed of six subunits; NqrA, NqrB, NqrC, NqrD, NqrE and NqrF.

It localises to the cell inner membrane. The catalysed reaction is a ubiquinone + n Na(+)(in) + NADH + H(+) = a ubiquinol + n Na(+)(out) + NAD(+). NQR complex catalyzes the reduction of ubiquinone-1 to ubiquinol by two successive reactions, coupled with the transport of Na(+) ions from the cytoplasm to the periplasm. NqrA to NqrE are probably involved in the second step, the conversion of ubisemiquinone to ubiquinol. The sequence is that of Na(+)-translocating NADH-quinone reductase subunit D from Chlamydia trachomatis serovar L2 (strain ATCC VR-902B / DSM 19102 / 434/Bu).